A 473-amino-acid chain; its full sequence is Siroheme synthase (473 aa).

The interval 1–203 (MTLFPIFADL…QQPGLAEQEL (203 aa)) is precorrin-2 dehydrogenase /sirohydrochlorin ferrochelatase. Residues 22–23 (AV) and 43–44 (PR) each bind NAD(+). Phosphoserine is present on S128. The uroporphyrinogen-III C-methyltransferase stretch occupies residues 216 to 473 (GSVVLVGAGP…GLPGPQALAA (258 aa)). P225 is a binding site for S-adenosyl-L-methionine. D248 (proton acceptor) is an active-site residue. K270 serves as the catalytic Proton donor. S-adenosyl-L-methionine is bound by residues 302 to 304 (GGD), I307, 332 to 333 (TA), M384, and G413.

The protein in the N-terminal section; belongs to the precorrin-2 dehydrogenase / sirohydrochlorin ferrochelatase family. It in the C-terminal section; belongs to the precorrin methyltransferase family.

The catalysed reaction is uroporphyrinogen III + 2 S-adenosyl-L-methionine = precorrin-2 + 2 S-adenosyl-L-homocysteine + H(+). It carries out the reaction precorrin-2 + NAD(+) = sirohydrochlorin + NADH + 2 H(+). It catalyses the reaction siroheme + 2 H(+) = sirohydrochlorin + Fe(2+). It functions in the pathway cofactor biosynthesis; adenosylcobalamin biosynthesis; precorrin-2 from uroporphyrinogen III: step 1/1. It participates in cofactor biosynthesis; adenosylcobalamin biosynthesis; sirohydrochlorin from precorrin-2: step 1/1. The protein operates within porphyrin-containing compound metabolism; siroheme biosynthesis; precorrin-2 from uroporphyrinogen III: step 1/1. Its pathway is porphyrin-containing compound metabolism; siroheme biosynthesis; siroheme from sirohydrochlorin: step 1/1. It functions in the pathway porphyrin-containing compound metabolism; siroheme biosynthesis; sirohydrochlorin from precorrin-2: step 1/1. In terms of biological role, multifunctional enzyme that catalyzes the SAM-dependent methylations of uroporphyrinogen III at position C-2 and C-7 to form precorrin-2 via precorrin-1. Then it catalyzes the NAD-dependent ring dehydrogenation of precorrin-2 to yield sirohydrochlorin. Finally, it catalyzes the ferrochelation of sirohydrochlorin to yield siroheme. This chain is Siroheme synthase, found in Bordetella parapertussis (strain 12822 / ATCC BAA-587 / NCTC 13253).